Reading from the N-terminus, the 530-residue chain is Ubiquitin carboxyl-terminal hydrolase 17-like protein 18 (530 aa).

Residues 80-375 (AGLQNMGNTC…QAYVLFYIQK (296 aa)) enclose the USP domain. Cys89 functions as the Nucleophile in the catalytic mechanism. The Proton acceptor role is filled by His334. 2 stretches are compositionally biased toward basic and acidic residues: residues 382 to 392 (SESVSRGREPR) and 398 to 413 (DTDRRAKQGELKRDHP). Disordered regions lie at residues 382–414 (SESVSRGREPRALGAEDTDRRAKQGELKRDHPC) and 509–530 (RGRARRSKGKNKHSKRALLVCQ). Positions 510–524 (GRARRSKGKNKHSKR) are enriched in basic residues.

It belongs to the peptidase C19 family. USP17 subfamily.

It localises to the nucleus. The protein resides in the endoplasmic reticulum. The enzyme catalyses Thiol-dependent hydrolysis of ester, thioester, amide, peptide and isopeptide bonds formed by the C-terminal Gly of ubiquitin (a 76-residue protein attached to proteins as an intracellular targeting signal).. Deubiquitinating enzyme that removes conjugated ubiquitin from specific proteins to regulate different cellular processes that may include cell proliferation, progression through the cell cycle, apoptosis, cell migration, and the cellular response to viral infection. In Homo sapiens (Human), this protein is Ubiquitin carboxyl-terminal hydrolase 17-like protein 18 (USP17L18).